A 669-amino-acid polypeptide reads, in one-letter code: Acetyl-coenzyme A synthetase (669 aa).

CoA is bound by residues 211–214 and threonine 329; that span reads RGGK. Residues 404–406, 428–433, aspartate 519, and arginine 534 each bind ATP; these read GEP and DTYWQT. Residue serine 542 participates in CoA binding. ATP is bound at residue arginine 545. CoA is bound at residue arginine 602.

It belongs to the ATP-dependent AMP-binding enzyme family.

The catalysed reaction is acetate + ATP + CoA = acetyl-CoA + AMP + diphosphate. It functions in the pathway ketone degradation; acetoin degradation. The protein operates within antibiotic biosynthesis; penicillin biosynthesis. In Penicillium chrysogenum (Penicillium notatum), this protein is Acetyl-coenzyme A synthetase (facA).